We begin with the raw amino-acid sequence, 229 residues long: Large ribosomal subunit protein uL1 (229 aa).

This sequence belongs to the universal ribosomal protein uL1 family. Part of the 50S ribosomal subunit.

Functionally, binds directly to 23S rRNA. The L1 stalk is quite mobile in the ribosome, and is involved in E site tRNA release. Its function is as follows. Protein L1 is also a translational repressor protein, it controls the translation of the L11 operon by binding to its mRNA. The sequence is that of Large ribosomal subunit protein uL1 from Haemophilus influenzae (strain PittEE).